The chain runs to 351 residues: Dihydroorotate dehydrogenase (quinone) (351 aa).

FMN is bound by residues 61 to 65 (AGLDK) and T85. Position 65 (K65) interacts with substrate. 110-114 (NRMGF) provides a ligand contact to substrate. Residues N139 and N172 each contribute to the FMN site. N172 lines the substrate pocket. S175 functions as the Nucleophile in the catalytic mechanism. N177 lines the substrate pocket. Residues K217 and T245 each contribute to the FMN site. 246 to 247 (NT) contributes to the substrate binding site. Residues G268, G297, and 318-319 (YS) each bind FMN.

Belongs to the dihydroorotate dehydrogenase family. Type 2 subfamily. In terms of assembly, monomer. FMN serves as cofactor.

The protein resides in the cell membrane. It catalyses the reaction (S)-dihydroorotate + a quinone = orotate + a quinol. Its pathway is pyrimidine metabolism; UMP biosynthesis via de novo pathway; orotate from (S)-dihydroorotate (quinone route): step 1/1. Catalyzes the conversion of dihydroorotate to orotate with quinone as electron acceptor. This Stenotrophomonas maltophilia (strain R551-3) protein is Dihydroorotate dehydrogenase (quinone).